Reading from the N-terminus, the 148-residue chain is Arginine repressor (148 aa).

This sequence belongs to the ArgR family.

Its subcellular location is the cytoplasm. It functions in the pathway amino-acid biosynthesis; L-arginine biosynthesis [regulation]. Regulates arginine biosynthesis genes. This is Arginine repressor from Chlorobium limicola (strain DSM 245 / NBRC 103803 / 6330).